Reading from the N-terminus, the 355-residue chain is Chemerin-like receptor 2 (355 aa).

Residues M1–S41 lie on the Extracellular side of the membrane. N-linked (GlcNAc...) asparagine glycosylation occurs at N14. Residues L42–F62 traverse the membrane as a helical segment. The Cytoplasmic segment spans residues T63–T73. Residues L74 to I94 form a helical membrane-spanning segment. Topologically, residues S95–A112 are extracellular. C110 and C187 form a disulfide bridge. The helical transmembrane segment at N113–L133 threads the bilayer. The Cytoplasmic portion of the chain corresponds to D134 to S154. Residues L155–F175 form a helical membrane-spanning segment. At R176–K210 the chain is on the extracellular side. A helical membrane pass occupies residues F211 to F231. Over K232 to T247 the chain is Cytoplasmic. The chain crosses the membrane as a helical span at residues I248 to W268. Residues E269–I286 lie on the Extracellular side of the membrane. The helical transmembrane segment at P287–I307 threads the bilayer. Residues S308–Q355 lie on the Cytoplasmic side of the membrane.

Belongs to the chemokine-like receptor (CMKLR) family.

It is found in the cell membrane. Receptor for chemoattractant adipokine chemerin/RARRES2 suggesting a role for this receptor in the regulation of inflammation and energy homesotasis. Signals mainly via beta-arrestin pathway. Binding of RARRES2 activates weakly G proteins, calcium mobilization and MAPK1/MAPK3 (ERK1/2) phosphorylation too. Acts also as a receptor for TAFA1, mediates its effects on neuronal stem-cell proliferation and differentiation via the activation of ROCK/ERK and ROCK/STAT3 signaling pathway. This chain is Chemerin-like receptor 2 (CMKLR2), found in Macaca mulatta (Rhesus macaque).